Consider the following 110-residue polypeptide: SOSS complex subunit C (110 aa).

The protein belongs to the SOSS-C family. As to quaternary structure, belongs to the multiprotein complex Integrator. Component of the SOSS complex, composed of soss-b (soss-b1/nabp2 or soss-b2/nabp1), soss-a/ints3 and soss-c/inip.

The protein resides in the nucleus. Component of the SOSS complex, a multiprotein complex that functions downstream of the MRN complex to promote DNA repair and G2/M checkpoint. The SOSS complex associates with single-stranded DNA at DNA lesions and influences diverse endpoints in the cellular DNA damage response including cell-cycle checkpoint activation, recombinational repair and maintenance of genomic stability. Required for efficient homologous recombination-dependent repair of double-strand breaks (DSBs). In Xenopus laevis (African clawed frog), this protein is SOSS complex subunit C (inip).